A 335-amino-acid chain; its full sequence is Holliday junction branch migration complex subunit RuvB (335 aa).

The large ATPase domain (RuvB-L) stretch occupies residues 1 to 181; sequence MERIVEVEKF…FGMHFRLQFY (181 aa). ATP is bound by residues Leu20, Arg21, Gly62, Lys65, Thr66, Thr67, 128-130, Arg171, Tyr181, and Arg218; that span reads EDF. Residue Thr66 participates in Mg(2+) binding. The small ATPAse domain (RuvB-S) stretch occupies residues 182 to 252; it reads TPQELAQIIT…RTQKALEALG (71 aa). Positions 255–335 are head domain (RuvB-H); sequence ERGFDELDLK…LTPNIQNSLF (81 aa). Residues Arg309 and Arg314 each contribute to the DNA site.

The protein belongs to the RuvB family. Homohexamer. Forms an RuvA(8)-RuvB(12)-Holliday junction (HJ) complex. HJ DNA is sandwiched between 2 RuvA tetramers; dsDNA enters through RuvA and exits via RuvB. An RuvB hexamer assembles on each DNA strand where it exits the tetramer. Each RuvB hexamer is contacted by two RuvA subunits (via domain III) on 2 adjacent RuvB subunits; this complex drives branch migration. In the full resolvosome a probable DNA-RuvA(4)-RuvB(12)-RuvC(2) complex forms which resolves the HJ.

It is found in the cytoplasm. It catalyses the reaction ATP + H2O = ADP + phosphate + H(+). Its function is as follows. The RuvA-RuvB-RuvC complex processes Holliday junction (HJ) DNA during genetic recombination and DNA repair, while the RuvA-RuvB complex plays an important role in the rescue of blocked DNA replication forks via replication fork reversal (RFR). RuvA specifically binds to HJ cruciform DNA, conferring on it an open structure. The RuvB hexamer acts as an ATP-dependent pump, pulling dsDNA into and through the RuvAB complex. RuvB forms 2 homohexamers on either side of HJ DNA bound by 1 or 2 RuvA tetramers; 4 subunits per hexamer contact DNA at a time. Coordinated motions by a converter formed by DNA-disengaged RuvB subunits stimulates ATP hydrolysis and nucleotide exchange. Immobilization of the converter enables RuvB to convert the ATP-contained energy into a lever motion, pulling 2 nucleotides of DNA out of the RuvA tetramer per ATP hydrolyzed, thus driving DNA branch migration. The RuvB motors rotate together with the DNA substrate, which together with the progressing nucleotide cycle form the mechanistic basis for DNA recombination by continuous HJ branch migration. Branch migration allows RuvC to scan DNA until it finds its consensus sequence, where it cleaves and resolves cruciform DNA. The protein is Holliday junction branch migration complex subunit RuvB of Nitratiruptor sp. (strain SB155-2).